The chain runs to 366 residues: Putative agmatine deiminase (366 aa).

The active-site Amidino-cysteine intermediate is cysteine 357.

Belongs to the agmatine deiminase family.

It catalyses the reaction agmatine + H2O = N-carbamoylputrescine + NH4(+). The protein is Putative agmatine deiminase of Lactococcus lactis subsp. lactis (strain IL1403) (Streptococcus lactis).